Reading from the N-terminus, the 182-residue chain is uncharacterized protein (182 aa).

Disordered stretches follow at residues 1 to 73 (MMSG…YRSL) and 105 to 182 (SMST…HLNR). Low complexity-rich tracts occupy residues 43–68 (RPSPFLSPSSSSSQTSISPTPTETSS) and 105–121 (SMSTLELSSSTLSSPVT). Over residues 122-131 (APAPPPPPTS) the composition is skewed to pro residues.

This is an uncharacterized protein from Caenorhabditis elegans.